The following is a 311-amino-acid chain: Pyrimidine-specific ribonucleoside hydrolase RihA (311 aa).

The active site involves His-240.

Belongs to the IUNH family. RihA subfamily.

In terms of biological role, hydrolyzes cytidine or uridine to ribose and cytosine or uracil, respectively. The polypeptide is Pyrimidine-specific ribonucleoside hydrolase RihA (Salmonella newport (strain SL254)).